Consider the following 300-residue polypeptide: Cation-efflux pump FieF (300 aa).

4 consecutive transmembrane segments (helical) span residues 11–31 (LAAV…VFAW), 40–60 (LASL…LLVV), 81–101 (LAAL…ILTG), and 114–134 (PEVG…LVSF). Positions 45 and 49 each coordinate Zn(2+). Positions 153 and 157 each coordinate Zn(2+). 2 helical membrane-spanning segments follow: residues 156–176 (SDLL…KGIT) and 182–202 (FALG…YDAV).

Belongs to the cation diffusion facilitator (CDF) transporter (TC 2.A.4) family. FieF subfamily. In terms of assembly, homodimer.

It localises to the cell inner membrane. It catalyses the reaction Zn(2+)(in) + H(+)(out) = Zn(2+)(out) + H(+)(in). The catalysed reaction is Cd(2+)(in) + H(+)(out) = Cd(2+)(out) + H(+)(in). It carries out the reaction Fe(2+)(in) + H(+)(out) = Fe(2+)(out) + H(+)(in). Functionally, divalent metal cation transporter which exports Zn(2+), Cd(2+) and possibly Fe(2+). May be involved in zinc and iron detoxification by efflux. This chain is Cation-efflux pump FieF, found in Pectobacterium atrosepticum (strain SCRI 1043 / ATCC BAA-672) (Erwinia carotovora subsp. atroseptica).